The primary structure comprises 163 residues: MSHLNLATLDTSQHPYLPASSQTLFAAKAKRKFTFEDISKQIGRNEVATAAIFYGQAKASAEDIANLAKVLDIPLKLLEEQLSGFPDRGRSVEMPPKEPLIYRLYEIVQNYGYAYKAVLNEKFGDGIMSAISFSTKVEKETDADGNNWAVITLRGKWLPFSRF.

Catalysis depends on residues Arg-103, Glu-106, and Ser-129.

It belongs to the cyanase family.

The enzyme catalyses cyanate + hydrogencarbonate + 3 H(+) = NH4(+) + 2 CO2. In terms of biological role, catalyzes the reaction of cyanate with bicarbonate to produce ammonia and carbon dioxide. The sequence is that of Cyanate hydratase from Talaromyces stipitatus (strain ATCC 10500 / CBS 375.48 / QM 6759 / NRRL 1006) (Penicillium stipitatum).